The primary structure comprises 472 residues: Poly(A) polymerase catalytic subunit (472 aa).

Catalysis depends on residues D194 and D196.

The protein belongs to the poxviridae poly(A) polymerase catalytic subunit family. In terms of assembly, heterodimer of a large (catalytic) subunit and a small (regulatory) subunit.

The enzyme catalyses RNA(n) + ATP = RNA(n)-3'-adenine ribonucleotide + diphosphate. Its function is as follows. Polymerase that creates the 3'-poly(A) tail of mRNA's. The chain is Poly(A) polymerase catalytic subunit (PAPL) from Fowlpox virus (strain NVSL) (FPV).